The primary structure comprises 383 residues: Neuropeptide Y receptor type 1 (383 aa).

Over 1 to 34 (MNSTSFSQLENHSVHYNLSEEKPSFFAFENDDCH) the chain is Extracellular. N-linked (GlcNAc...) asparagine glycans are attached at residues Asn-2, Asn-11, and Asn-17. The chain crosses the membrane as a helical span at residues 35–55 (LPLAVIFTLALAYGAVIILGV). At 56–87 (SGNLALILIILKQKEMRNVTNILIVNLSFSDL) the chain is on the cytoplasmic side. Residues 88 to 108 (LVAIMCLPFTFVYTLMDHWIF) traverse the membrane as a helical segment. Over 109–116 (GEIMCKLN) the chain is Extracellular. A disulfide bridge connects residues Cys-113 and Cys-198. The helical transmembrane segment at 117 to 137 (PFVQCVSITVSIFSLVLIAVE) threads the bilayer. The Cytoplasmic portion of the chain corresponds to 138–154 (RHQLIINPRGWRPNNRH). A helical transmembrane segment spans residues 155 to 175 (AYIGIAVIWVLAVASSLPFMI). Residues 176–211 (YQVLTDEPFQNVTLDAFKDKLVCFDQFPSDSHRLSY) lie on the Extracellular side of the membrane. The helical transmembrane segment at 212–232 (TTLLLVLQYFGPLCFIFICYF) threads the bilayer. The Cytoplasmic portion of the chain corresponds to 233-260 (KIYIRLKRRNNMMDKMRDSKYRSSESKR). A helical membrane pass occupies residues 261-281 (INIMLLSIVVAFAVCWLPLTI). The Extracellular segment spans residues 282–299 (FNTVFDWNHQIIATCNHN). Residues 300–320 (LLFLLCHLTAMISTCVNPIFY) form a helical membrane-spanning segment. At 321–383 (GFLNKNFQRD…KISCVENEKI (63 aa)) the chain is on the cytoplasmic side. Cys-338 carries S-palmitoyl cysteine lipidation. Phosphoserine occurs at positions 368 and 376.

It belongs to the G-protein coupled receptor 1 family.

It localises to the cell membrane. Its function is as follows. Receptor for neuropeptide Y and peptide YY. This is Neuropeptide Y receptor type 1 (NPY1R) from Cavia porcellus (Guinea pig).